The primary structure comprises 78 residues: MSRVCDLSGTRANNGMAVSHSHIRTKKLQQANLQQRKLWWEEGKKWIKVRVTTRTLKTIQKKGLNSYAKAMGIDLSKV.

The protein belongs to the bacterial ribosomal protein bL28 family.

In Prochlorococcus marinus (strain MIT 9211), this protein is Large ribosomal subunit protein bL28.